Reading from the N-terminus, the 167-residue chain is Protein DLS1 (167 aa).

A Phosphoserine modification is found at Ser-17.

Component of the ISW2 complex, which at least consists of ISW2, ITC1, DLS1 and DPB4.

The protein localises to the nucleus. Functions as a component of the ISW2 complex, which acts in remodeling the chromatin by catalyzing an ATP-dependent alteration in the structure of nucleosomal DNA. The ISW2 complex is involved in coordinating transcriptional repression and in inheritance of telomeric silencing. It is involved in repression of MAT a-specific genes, INO1, and early meiotic genes during mitotic growth dependent upon transcription factor UME6 and in a parallel pathway to the RPD3-SIN3 histone deacetylase complex. DLS1 is partially required for the ISW2 complex chromatin remodeling activity and is not required for its interaction with chromatin. The sequence is that of Protein DLS1 (DLS1) from Saccharomyces cerevisiae (strain ATCC 204508 / S288c) (Baker's yeast).